Reading from the N-terminus, the 692-residue chain is Elongation factor G (692 aa).

One can recognise a tr-type G domain in the interval 8 to 282 (ENTRNIGIMA…AVIDYLPSPV (275 aa)). Residues 17–24 (AHIDAGKT), 81–85 (DTPGH), and 135–138 (NKMD) each bind GTP.

It belongs to the TRAFAC class translation factor GTPase superfamily. Classic translation factor GTPase family. EF-G/EF-2 subfamily.

It localises to the cytoplasm. In terms of biological role, catalyzes the GTP-dependent ribosomal translocation step during translation elongation. During this step, the ribosome changes from the pre-translocational (PRE) to the post-translocational (POST) state as the newly formed A-site-bound peptidyl-tRNA and P-site-bound deacylated tRNA move to the P and E sites, respectively. Catalyzes the coordinated movement of the two tRNA molecules, the mRNA and conformational changes in the ribosome. The sequence is that of Elongation factor G from Lysinibacillus sphaericus (strain C3-41).